A 200-amino-acid polypeptide reads, in one-letter code: Recombination protein RecR (200 aa).

The segment at C59–C74 adopts a C4-type zinc-finger fold. Residues R82 to P177 form the Toprim domain.

It belongs to the RecR family.

In terms of biological role, may play a role in DNA repair. It seems to be involved in an RecBC-independent recombinational process of DNA repair. It may act with RecF and RecO. The polypeptide is Recombination protein RecR (Caulobacter sp. (strain K31)).